The sequence spans 199 residues: Recombination protein RecR (199 aa).

Residues Cys-58–Cys-73 form a C4-type zinc finger. Positions Lys-81–Pro-175 constitute a Toprim domain.

This sequence belongs to the RecR family.

May play a role in DNA repair. It seems to be involved in an RecBC-independent recombinational process of DNA repair. It may act with RecF and RecO. The protein is Recombination protein RecR of Prochlorococcus marinus (strain MIT 9312).